Reading from the N-terminus, the 265-residue chain is 4-diphosphocytidyl-2-C-methyl-D-erythritol kinase (265 aa).

Lys-8 is an active-site residue. 95-105 (PIGAGLGGGSS) is an ATP binding site. The active site involves Asp-135.

It belongs to the GHMP kinase family. IspE subfamily.

The enzyme catalyses 4-CDP-2-C-methyl-D-erythritol + ATP = 4-CDP-2-C-methyl-D-erythritol 2-phosphate + ADP + H(+). It functions in the pathway isoprenoid biosynthesis; isopentenyl diphosphate biosynthesis via DXP pathway; isopentenyl diphosphate from 1-deoxy-D-xylulose 5-phosphate: step 3/6. In terms of biological role, catalyzes the phosphorylation of the position 2 hydroxy group of 4-diphosphocytidyl-2C-methyl-D-erythritol. The chain is 4-diphosphocytidyl-2-C-methyl-D-erythritol kinase from Ureaplasma parvum serovar 3 (strain ATCC 27815 / 27 / NCTC 11736).